Here is a 301-residue protein sequence, read N- to C-terminus: B3 domain-containing protein At5g18090 (301 aa).

The TF-B3 1 DNA-binding region spans 18-113 (FFKILRSADL…CFTVDIYQID (96 aa)). Disordered stretches follow at residues 123–142 (SATI…NNIY) and 153–194 (SWSE…KMKV). Residues 133-142 (NKREQRNNIY) are compositionally biased toward basic and acidic residues. The segment at residues 209–301 (VPEFTLTIKK…PTEMLVRVSK (93 aa)) is a DNA-binding region (TF-B3 2).

Its subcellular location is the nucleus. This Arabidopsis thaliana (Mouse-ear cress) protein is B3 domain-containing protein At5g18090.